A 72-amino-acid chain; its full sequence is Phycobilisome 37.5 kDa linker polypeptide, phycocyanin-associated, rod (72 aa).

Residues 1–72 (MTSSAAAIRL…ASGNISVREF (72 aa)) form the PBS-linker domain.

Belongs to the phycobilisome linker protein family.

The protein localises to the cellular thylakoid membrane. In terms of biological role, rod linker protein, associated with phycocyanin. Linker polypeptides determine the state of aggregation and the location of the disk-shaped phycobiliprotein units within the phycobilisome and modulate their spectroscopic properties in order to mediate a directed and optimal energy transfer. The polypeptide is Phycobilisome 37.5 kDa linker polypeptide, phycocyanin-associated, rod (cpcH2) (Pseudanabaena tenuis (strain PCC 7409)).